The sequence spans 182 residues: Large ribosomal subunit protein uL5 (182 aa).

This sequence belongs to the universal ribosomal protein uL5 family. Part of the 50S ribosomal subunit; part of the 5S rRNA/L5/L18/L25 subcomplex. Contacts the 5S rRNA and the P site tRNA. Forms a bridge to the 30S subunit in the 70S ribosome.

Functionally, this is one of the proteins that bind and probably mediate the attachment of the 5S RNA into the large ribosomal subunit, where it forms part of the central protuberance. In the 70S ribosome it contacts protein S13 of the 30S subunit (bridge B1b), connecting the 2 subunits; this bridge is implicated in subunit movement. Contacts the P site tRNA; the 5S rRNA and some of its associated proteins might help stabilize positioning of ribosome-bound tRNAs. The sequence is that of Large ribosomal subunit protein uL5 from Acidobacterium capsulatum (strain ATCC 51196 / DSM 11244 / BCRC 80197 / JCM 7670 / NBRC 15755 / NCIMB 13165 / 161).